Consider the following 1938-residue polypeptide: Myosin-1 (1938 aa).

The region spanning 33-82 (DAKTSVFVADPKESFVKATVQSREGGKVTAKTEAGATVTVKEDQCFPMNP) is the Myosin N-terminal SH3-like domain. Phosphothreonine is present on residues T64 and T69. Positions 86–781 (DKIEDMAMMT…LLGLLEEMRD (696 aa)) constitute a Myosin motor domain. An N6,N6,N6-trimethyllysine modification is found at K130. 179-186 (GESGAGKT) is an ATP binding site. Y389 is modified (phosphotyrosine). T419 bears the Phosphothreonine mark. Position 424 is a phosphotyrosine (Y424). At S625 the chain carries Phosphoserine. The segment at 658–680 (LNKLMTNLRSTHPHFVRCIIPNE) is actin-binding. A Pros-methylhistidine modification is found at H756. Residues 760-774 (KFGHTKVFFKAGLLG) are actin-binding. Positions 784 to 813 (LAQIITRTQARCRGFLARVEYQRMVERRES) constitute an IQ domain. A coiled-coil region spans residues 842-1938 (LLKSAETEKE…EVHTKIISEE (1097 aa)). 2 positions are modified to phosphoserine: S1091 and S1095. 2 disordered regions span residues 1124-1146 (EIEA…SREL) and 1152-1171 (RLEE…KKRE). Residues 1127–1146 (AERASRAKAEKQRSDLSREL) show a composition bias toward basic and acidic residues. S1161 and S1236 each carry phosphoserine. Phosphothreonine is present on T1240. The residue at position 1242 (S1242) is a Phosphoserine. T1254 is subject to Phosphothreonine. Residue S1260 is modified to Phosphoserine. T1285 bears the Phosphothreonine mark. Residues S1291, S1302, and S1305 each carry the phosphoserine modification. Phosphotyrosine is present on Y1463. Position 1466 is a phosphothreonine (T1466). S1473 is subject to Phosphoserine. Y1491 bears the Phosphotyrosine mark. Phosphoserine is present on S1494. T1500 is subject to Phosphothreonine. Phosphoserine is present on S1513. Residue T1516 is modified to Phosphothreonine. A phosphoserine mark is found at S1541, S1553, S1573, S1713, and S1725. Phosphothreonine occurs at positions 1729 and 1735. S1738 carries the phosphoserine modification.

The protein belongs to the TRAFAC class myosin-kinesin ATPase superfamily. Myosin family. In terms of assembly, muscle myosin is a hexameric protein that consists of 2 heavy chain subunits (MHC), 2 alkali light chain subunits (MLC) and 2 regulatory light chain subunits (MLC-2). Interacts with SLC26A5.

Its subcellular location is the cytoplasm. The protein localises to the myofibril. Its function is as follows. Required for normal hearing. It plays a role in cochlear amplification of auditory stimuli, likely through the positive regulation of prestin (SLC26A5) activity and outer hair cell (OHC) electromotility. The sequence is that of Myosin-1 (MYH1) from Equus caballus (Horse).